The chain runs to 346 residues: MQFVDEANIRVEAGRGGNGVASFRREKYIPFGGPNGGDGGDGGSIYLIADRNINTLIDFRYTRDYKAQNGQAGMGQQKTGRAGQDLIIPVPEGTIVRDLDTQEMIGDLVEHGQKLLVAQGGRHGLGNVHFKSSTNRTPRQCTPGEPGDERNLGLELSVLADVGLLGMPNAGKSSLITAVSAARPKVANYPFTTLYPNLGVVRVSPESSFVIADIPGLIEGASEGAGLGVQFLKHLSRTGLLLHVVDIAPMDGVDPVESVHVIEKELEKYSDALAGKERWLVLNKTDLLLEEEASELCDQIVERLNWTGPVFAISAVNRVGTDDLVKEVAYGLEQNRLKAQEESVEE.

An Obg domain is found at 1–159; that stretch reads MQFVDEANIR…RNLGLELSVL (159 aa). Residues 127–149 form a disordered region; it reads NVHFKSSTNRTPRQCTPGEPGDE. Polar residues predominate over residues 130 to 140; sequence FKSSTNRTPRQ. Residues 160-333 enclose the OBG-type G domain; sequence ADVGLLGMPN…LVKEVAYGLE (174 aa). Residues 166 to 173, 191 to 195, 213 to 216, 283 to 286, and 314 to 316 contribute to the GTP site; these read GMPNAGKS, FTTLY, DIPG, NKTD, and SAV. S173 and T193 together coordinate Mg(2+).

It belongs to the TRAFAC class OBG-HflX-like GTPase superfamily. OBG GTPase family. In terms of assembly, monomer. The cofactor is Mg(2+).

Its subcellular location is the cytoplasm. An essential GTPase which binds GTP, GDP and possibly (p)ppGpp with moderate affinity, with high nucleotide exchange rates and a fairly low GTP hydrolysis rate. Plays a role in control of the cell cycle, stress response, ribosome biogenesis and in those bacteria that undergo differentiation, in morphogenesis control. The chain is GTPase Obg from Hydrogenovibrio crunogenus (strain DSM 25203 / XCL-2) (Thiomicrospira crunogena).